A 624-amino-acid chain; its full sequence is Kelch-like ECH-associated protein 1 (624 aa).

Cysteine 38 is modified (S-(2-succinyl)cysteine). In terms of domain architecture, BTB spans 77 to 149; that stretch reads CDVTLQVKYE…AYTASISVGE (73 aa). Residue arginine 135 forms an N5-[4-(S-L-cysteinyl)-5-methyl-1H-imidazol-2-yl]-L-ornithine (Arg-Cys) (interchain with C-151 in KEAP1) linkage. S-(2-succinyl)cysteine is present on residues cysteine 151 and cysteine 241. Residue cysteine 151 is modified to S-(2,3-dicarboxypropyl)cysteine; alternate. Cysteine 151 bears the S-nitrosocysteine; alternate mark. Residue cysteine 151 forms an N5-[4-(S-L-cysteinyl)-5-methyl-1H-imidazol-2-yl]-L-ornithine (Cys-Arg) (interchain with R-135 in KEAP1) linkage. In terms of domain architecture, BACK spans 184 to 286; the sequence is AIGIANFAEQ…TPRFLQTQLQ (103 aa). S-(2,3-dicarboxypropyl)cysteine is present on residues cysteine 257 and cysteine 273. S-(2-succinyl)cysteine occurs at positions 288 and 319. Residue cysteine 288 is modified to S-(2,3-dicarboxypropyl)cysteine; alternate. 6 Kelch repeats span residues 327-372, 373-423, 424-470, 471-517, 519-564, and 565-611; these read LIYT…VVGG, LLYA…VIDG, HIYA…VLNR, LLYA…VLHS, IYAA…VHQG, and RIYV…VTME. At cysteine 434 the chain carries S-cGMP-cysteine. S-(2-succinyl)cysteine is present on cysteine 613.

The protein belongs to the KEAP1 family. Component of the BCR(KEAP1) E3 ubiquitin ligase complex, at least composed of 2 molecules of CUL3, 2 molecules of KEAP1, and RBX1. Interacts with NFE2L2/NRF2; the interaction is direct. Forms a ternary complex with NFE2L2/NRF2 and PGAM5. Interacts with (phosphorylated) SQSTM1/p62; the interaction is direct and inactivates the BCR(KEAP1) complex by sequestering it in inclusion bodies, promoting its degradation. Interacts with NFE2L1. Interacts with BPTF and PTMA. Interacts with MAP1LC3B. Interacts indirectly with ENC1. Interacts with SESN1 and SESN2. Interacts with HSP90AA1 and HSP90AB1. Interacts with PGCKA1; this interaction prevents the ubiquitination of KEAP1 by TRIM25, thus protecting KEAP1 from degradation. Non-enzymatic covalent modifications of reactive cysteines by electrophile metabolites inactivate the BCR(KEAP1) complex. Accumulation of fumarate promotes the formation of cysteine S-succination (S-(2-succinyl)cysteine), leading to inactivate the BCR(KEAP1) complex and promote NFE2L2/NRF2 nuclear accumulation and activation. Nitric oxide-dependent 8-Nitro-cGMP formation promotes cysteine guanylation (S-cGMP-cysteine), leading to NFE2L2/NRF2 nuclear accumulation and activation. Itaconate, an anti-inflammatory metabolite generated in response to lipopolysaccharide, alkylates cysteines, activating NFE2L2/NRF2. Methylglyoxal, a reactive metabolite that accumulates when the glycolytic enzyme PGK1 is inhibited, promotes formation of a methylimidazole cross-link between proximal Cys-151 and Arg-135 on another KEAP1 molecule, resulting in an inactive dimer that inactivates the BCR(KEAP1) complex. In terms of processing, degraded via a proteasomal-independent process during selective autophagy: interaction with phosphorylated SQSTM1/p62 sequesters KEAP1 in inclusion bodies, leading to its degradation. Post-translationally, auto-ubiquitinated by the BCR(KEAP1) complex. Quinone-induced oxidative stress, but not sulforaphane, increases its ubiquitination. Ubiquitination and subsequent degradation is most pronounced following prolonged exposure of cells to oxidative stress, particularly in glutathione-deficient cells that are highly susceptible to oxidative stress. Deubiquitinated by USP25; leading to stabilization. Ubiquitinated by TRIM25; leading to degradation upon ER stress.

The protein localises to the cytoplasm. It is found in the nucleus. It participates in protein modification; protein ubiquitination. With respect to regulation, ubiquitin ligase activity of the BCR(KEAP1) complex is inhibited by oxidative stress and electrophile metabolites such as sulforaphane. Electrophile metabolites react with reactive cysteine residues in KEAP1 and trigger non-enzymatic covalent modifications of these cysteine residues, leading to inactivate the ubiquitin ligase activity of the BCR(KEAP1) complex. Selective autophagy also inactivates the BCR(KEAP1) complex via interaction between KEAP1 and SQSTM1/p62, which sequesters the complex in inclusion bodies and promotes its degradation. In terms of biological role, substrate-specific adapter of a BCR (BTB-CUL3-RBX1) E3 ubiquitin ligase complex that regulates the response to oxidative stress by targeting NFE2L2/NRF2 for ubiquitination. KEAP1 acts as a key sensor of oxidative and electrophilic stress: in normal conditions, the BCR(KEAP1) complex mediates ubiquitination and degradation of NFE2L2/NRF2, a transcription factor regulating expression of many cytoprotective genes. In response to oxidative stress, different electrophile metabolites trigger non-enzymatic covalent modifications of highly reactive cysteine residues in KEAP1, leading to inactivate the ubiquitin ligase activity of the BCR(KEAP1) complex, promoting NFE2L2/NRF2 nuclear accumulation and expression of phase II detoxifying enzymes. In response to selective autophagy, KEAP1 is sequestered in inclusion bodies following its interaction with SQSTM1/p62, leading to inactivation of the BCR(KEAP1) complex and activation of NFE2L2/NRF2. The BCR(KEAP1) complex also mediates ubiquitination of SQSTM1/p62, increasing SQSTM1/p62 sequestering activity and degradation. The BCR(KEAP1) complex also targets BPTF and PGAM5 for ubiquitination and degradation by the proteasome. The protein is Kelch-like ECH-associated protein 1 of Rattus norvegicus (Rat).